The sequence spans 156 residues: Small ribosomal subunit protein uS7 (156 aa).

The protein belongs to the universal ribosomal protein uS7 family. Part of the 30S ribosomal subunit. Contacts proteins S9 and S11.

Functionally, one of the primary rRNA binding proteins, it binds directly to 16S rRNA where it nucleates assembly of the head domain of the 30S subunit. Is located at the subunit interface close to the decoding center, probably blocks exit of the E-site tRNA. The protein is Small ribosomal subunit protein uS7 of Rhizobium rhizogenes (strain K84 / ATCC BAA-868) (Agrobacterium radiobacter).